The sequence spans 139 residues: Cytochrome c-551 (139 aa).

The first 20 residues, 1-20 (MTRTLAVVLAMTFSAAPVFA), serve as a signal peptide directing secretion. Residues Cys34, Cys37, His38, and Met116 each coordinate heme c.

Belongs to the cytochrome c family. Post-translationally, binds 1 heme c group covalently per subunit.

The protein is Cytochrome c-551 of Roseobacter denitrificans (strain ATCC 33942 / OCh 114) (Erythrobacter sp. (strain OCh 114)).